The primary structure comprises 274 residues: Large ribosomal subunit protein uL2 (274 aa).

Disordered stretches follow at residues 35 to 60 and 224 to 274; these read EPQHQKSGRNNNGHITTRHKGGGHKH and VMNP…RRKK. Basic residues predominate over residues 50–60; the sequence is TTRHKGGGHKH. The span at 229–246 shows a compositional bias: basic and acidic residues; sequence DHPHGGGEGKTGEGRHAV.

It belongs to the universal ribosomal protein uL2 family. In terms of assembly, part of the 50S ribosomal subunit. Forms a bridge to the 30S subunit in the 70S ribosome.

Functionally, one of the primary rRNA binding proteins. Required for association of the 30S and 50S subunits to form the 70S ribosome, for tRNA binding and peptide bond formation. It has been suggested to have peptidyltransferase activity; this is somewhat controversial. Makes several contacts with the 16S rRNA in the 70S ribosome. The chain is Large ribosomal subunit protein uL2 from Delftia acidovorans (strain DSM 14801 / SPH-1).